A 270-amino-acid polypeptide reads, in one-letter code: DNA packaging protein OPG160 (270 aa).

55–62 (VYNPDYDG) is a binding site for ATP.

It belongs to the orthopoxvirus OPG160 protein family. Interacts with protein OPG137.

In terms of biological role, participates in viral DNA packaging and virion morphogenesis. The chain is DNA packaging protein OPG160 (OPG160) from Homo sapiens (Human).